Here is a 481-residue protein sequence, read N- to C-terminus: Aromatic amino acid aminotransferase C1773.13 (481 aa).

The protein belongs to the class-I pyridoxal-phosphate-dependent aminotransferase family. It depends on pyridoxal 5'-phosphate as a cofactor.

It is found in the cytoplasm. The catalysed reaction is an aromatic L-alpha-amino acid + 2-oxoglutarate = an aromatic oxo-acid + L-glutamate. Its function is as follows. Has aromatic amino acid transaminase activity. This chain is Aromatic amino acid aminotransferase C1773.13, found in Schizosaccharomyces pombe (strain 972 / ATCC 24843) (Fission yeast).